The following is a 206-amino-acid chain: Protein 6b (206 aa).

Residues 162-182 are disordered; the sequence is YTEQAEEEEEEEEEEEEEEVL. Positions 165-182 are enriched in acidic residues; sequence QAEEEEEEEEEEEEEEVL.

In terms of biological role, involved in tumor formation and increases auxin and cytokinin effects in host plants. This Allorhizobium ampelinum (strain ATCC BAA-846 / DSM 112012 / S4) (Agrobacterium vitis (strain S4)) protein is Protein 6b (6b).